The following is a 107-amino-acid chain: Iron-binding protein IscA (107 aa).

Fe cation-binding residues include cysteine 35, cysteine 99, and cysteine 101.

This sequence belongs to the HesB/IscA family. In terms of assembly, homodimer; may form tetramers and higher multimers. The cofactor is Fe cation.

Functionally, is able to transfer iron-sulfur clusters to apo-ferredoxin. Multiple cycles of [2Fe2S] cluster formation and transfer are observed, suggesting that IscA acts catalytically. Recruits intracellular free iron so as to provide iron for the assembly of transient iron-sulfur cluster in IscU in the presence of IscS, L-cysteine and the thioredoxin reductase system TrxA/TrxB. This chain is Iron-binding protein IscA, found in Yersinia pestis bv. Antiqua (strain Angola).